The primary structure comprises 248 residues: Putative insertion sequence ATP-binding protein y4uH (248 aa).

ATP is bound at residue 106 to 113 (GPTGIGKS).

Belongs to the IS21/IS1162 putative ATP-binding protein family.

This is Putative insertion sequence ATP-binding protein y4uH from Sinorhizobium fredii (strain NBRC 101917 / NGR234).